We begin with the raw amino-acid sequence, 466 residues long: Membrane-bound lytic murein transglycosylase F (466 aa).

An N-terminal signal peptide occupies residues 1-24 (MKRFKLNYFIIGLIAILLTWSLWT). A non-LT domain region spans residues 25–268 (TVPWRNAHQD…RLEEKYLGHV (244 aa)). The tract at residues 269–466 (GGFDYVDTKT…KEKKAAQLAD (198 aa)) is LT domain. Glutamate 313 is an active-site residue.

The protein in the N-terminal section; belongs to the bacterial solute-binding protein 3 family. This sequence in the C-terminal section; belongs to the transglycosylase Slt family.

Its subcellular location is the cell outer membrane. It catalyses the reaction Exolytic cleavage of the (1-&gt;4)-beta-glycosidic linkage between N-acetylmuramic acid (MurNAc) and N-acetylglucosamine (GlcNAc) residues in peptidoglycan, from either the reducing or the non-reducing ends of the peptidoglycan chains, with concomitant formation of a 1,6-anhydrobond in the MurNAc residue.. Functionally, murein-degrading enzyme that degrades murein glycan strands and insoluble, high-molecular weight murein sacculi, with the concomitant formation of a 1,6-anhydromuramoyl product. Lytic transglycosylases (LTs) play an integral role in the metabolism of the peptidoglycan (PG) sacculus. Their lytic action creates space within the PG sacculus to allow for its expansion as well as for the insertion of various structures such as secretion systems and flagella. In Sodalis glossinidius (strain morsitans), this protein is Membrane-bound lytic murein transglycosylase F.